We begin with the raw amino-acid sequence, 573 residues long: FAD-dependent monooxygenase resA (573 aa).

An N-terminal signal peptide occupies residues Met-1–Ala-17. Ile-106 provides a ligand contact to FAD. N-linked (GlcNAc...) asparagine glycosylation occurs at Asn-235.

This sequence belongs to the FAD-binding monooxygenase family. The cofactor is FAD.

Its pathway is antifungal biosynthesis. FAD-dependent monooxygenase; part of the gene cluster that mediates the biosynthesis of the tetrahydropyranyl antifungal agent restricticin that acts as an inhibitor of CYP51 and blocks the ergosterol biosynthesis. The highly reducing polyketide synthase resH, the short chain dehydrogenase resG, the cyclase resF, the FAD-dependent monooxygenase resA and the enoylreductase resD are required to generate the first stable intermediate desmethylrestrictinol. ResH with resD biosynthesize the first polyketide chain intermediate that is reduced by resG, followed by epoxidation by resA before 6-endo cyclization via epoxide opening by resF leads to desmethylrestrictinol. The methyltransferase resE then catalyzes the C4 O-methylation of desmethylrestrictinol to produce restrictinol, and the nonribosomal peptide synthetase resC catalyzes the C3 esterification of restrictinol with glycine that leads to restricticin. The polypeptide is FAD-dependent monooxygenase resA (Aspergillus sclerotiorum).